The sequence spans 498 residues: Beta-amylase 5 (498 aa).

Substrate contacts are provided by Asp56, His96, and Asp104. The active-site Proton donor is the Glu189. Residues Lys298, His303, and Thr345 each contribute to the substrate site. Residue Glu383 is the Proton acceptor of the active site. Residues Asn384–Ala385 and Arg423 contribute to the substrate site.

This sequence belongs to the glycosyl hydrolase 14 family. Detected in phloem sieve elements.

It localises to the cytoplasm. The enzyme catalyses Hydrolysis of (1-&gt;4)-alpha-D-glucosidic linkages in polysaccharides so as to remove successive maltose units from the non-reducing ends of the chains.. Beta-amylase activity. Major cytosolic beta-amylase isoform in rosette leaves and inflorescences stems. The protein is Beta-amylase 5 (BAM5) of Arabidopsis thaliana (Mouse-ear cress).